A 1362-amino-acid chain; its full sequence is Integrator complex subunit 2 homolog (1362 aa).

Residues 1-10 are compositionally biased toward low complexity; that stretch reads MITSNNNNKN. Disordered stretches follow at residues 1-20, 629-660, and 928-963; these read MITS…EMKS, TTGT…SSPN, and NNNK…EEEE. The segment covering 945 to 955 has biased composition (basic and acidic residues); that stretch reads DDVKMKDKEKE.

Belongs to the Integrator subunit 2 family. In terms of assembly, component of the Integrator complex. The core complex associates with protein phosphatase 2A subunits, to form the Integrator-PP2A (INTAC) complex.

The protein resides in the nucleus. The protein localises to the cytoplasm. In terms of biological role, component of the integrator complex, a multiprotein complex that terminates RNA polymerase II (Pol II) transcription in the promoter-proximal region of genes. The integrator complex provides a quality checkpoint during transcription elongation by driving premature transcription termination of transcripts that are unfavorably configured for transcriptional elongation: the complex terminates transcription by (1) catalyzing dephosphorylation of the C-terminal domain (CTD) of Pol II subunit polr2a, (2) degrading the exiting nascent RNA transcript via endonuclease activity and (3) promoting the release of Pol II from bound DNA. The integrator complex is also involved in terminating the synthesis of non-coding Pol II transcripts, such as enhancer RNAs (eRNAs), small nuclear RNAs (snRNAs), telomerase RNAs and long non-coding RNAs (lncRNAs). The chain is Integrator complex subunit 2 homolog (ints2) from Dictyostelium discoideum (Social amoeba).